Reading from the N-terminus, the 865-residue chain is NBPF family member NBPF11 (865 aa).

A coiled-coil region spans residues 70–130 (MLRNERQFKE…RSLNEHLQAL (61 aa)). Residues 161-200 (KLSPENDEDEDEDVQVEEDEKVLESSAPREVQKAEESKVP) form a disordered region. Positions 165–181 (ENDEDEDEDVQVEEDEK) are enriched in acidic residues. Residues 165–259 (ENDEDEDEDV…GCQDALNILP (95 aa)) form the Olduvai 1 domain. Positions 190-200 (EVQKAEESKVP) are enriched in basic and acidic residues. Positions 339–401 (KSMLRNERQF…RSLNEHLQAL (63 aa)) form a coiled coil. 5 Olduvai domains span residues 436–528 (ENDN…HIIP), 529–617 (ENES…ATGP), 620–675 (SREL…VDMD), 676–767 (EIEK…PPCP), and 770–865 (SREL…SAAC). Disordered regions lie at residues 450–475 (AEKV…EDSL) and 520–567 (WEDA…GYST). Acidic residues-rich tracts occupy residues 530–539 (NESDDEEEEE) and 550–562 (ESEE…ESWD). The disordered stretch occupies residues 829–865 (RGRGRKEGEEDQRRKEEGEEKKGKKIKTHHAPGSAAC). A compositionally biased stretch (basic and acidic residues) spans 833 to 850 (RKEGEEDQRRKEEGEEKK).

This sequence belongs to the NBPF family. As to expression, expressed in spinal cord.

Its subcellular location is the cytoplasm. In Homo sapiens (Human), this protein is NBPF family member NBPF11.